The following is a 556-amino-acid chain: Sesquiterpene synthase 2 (556 aa).

Positions 309, 313, 453, and 461 each coordinate Mg(2+). Residues 309 to 313 carry the DDXXD motif motif; sequence DDIYD.

It belongs to the terpene synthase family. Tpsa subfamily. Mg(2+) is required as a cofactor. It depends on Mn(2+) as a cofactor. Mostly expressed in roots and mature leaflets and, to a lower extent, in rachis and developing leaflets.

It carries out the reaction (2E,6E)-farnesyl diphosphate = alpha-humulene + diphosphate. It catalyses the reaction (2E,6E)-farnesyl diphosphate = alpha-selinene + diphosphate. The catalysed reaction is (2E,6E)-farnesyl diphosphate = delta-cadinene + diphosphate. The enzyme catalyses (2E,6E)-farnesyl diphosphate = (1S,2S,4R)-beta-elemene + diphosphate. The protein operates within secondary metabolite biosynthesis; terpenoid biosynthesis. Sesquiterpene synthase involved in the biosynthesis of volatile compounds known for their medicinal efficacy for treating enteritis, dysentery, itch and some cancers. Mediates the conversion of (2E,6E)-farnesyl diphosphate (FPP) into beta-elemene, alpha-humulene, delta-cadinene and alpha-selinene. In Toona sinensis (Chinese mahogany), this protein is Sesquiterpene synthase 2.